The chain runs to 239 residues: Tetraspanin-9 (239 aa).

Topologically, residues 1 to 13 are cytoplasmic; it reads MARGCLCCVKYMM. Residues 14-34 traverse the membrane as a helical segment; the sequence is FLFNLLFWLSGCGLLGVGIWL. At 35–55 the chain is on the extracellular side; the sequence is SVSQGSFATFSPSFPSLSAAN. A helical transmembrane segment spans residues 56–76; the sequence is LVITLGSVVMVTGFLGCLGAI. The Cytoplasmic portion of the chain corresponds to 77 to 85; that stretch reads KENKCLLLS. The helical transmembrane segment at 86–106 threads the bilayer; the sequence is FFIVLLIILLAELILLILFFV. Residues 107–203 lie on the Extracellular side of the membrane; it reads YTEKVSENAK…VEEWLNDNKH (97 aa). Residue Asn180 is glycosylated (N-linked (GlcNAc...) asparagine). A helical transmembrane segment spans residues 204-224; the sequence is LLGTIAMCVLVLQLLGMAFSM. Residues 225–239 lie on the Cytoplasmic side of the membrane; that stretch reads TLYQQIHRAGKKYDA.

Belongs to the tetraspanin (TM4SF) family.

Its subcellular location is the membrane. This Danio rerio (Zebrafish) protein is Tetraspanin-9 (tspan9).